The primary structure comprises 151 residues: MRIILQRVNESRVEVAGQIIGRIEKGLNLLVGITPSDTDQEVAWMARKCLELRIFPDQSGKLSQSVQDIEGGLLVISQFTLYGDCRKGRRPSFDKAAPGAMAEQIYEQFVTKLRASGLQVETGQFGAMMNVYIENDGPVTLILEREAESER.

Positions 137–138 (GP) match the Gly-cisPro motif, important for rejection of L-amino acids motif.

The protein belongs to the DTD family. As to quaternary structure, homodimer.

It is found in the cytoplasm. The catalysed reaction is glycyl-tRNA(Ala) + H2O = tRNA(Ala) + glycine + H(+). It catalyses the reaction a D-aminoacyl-tRNA + H2O = a tRNA + a D-alpha-amino acid + H(+). An aminoacyl-tRNA editing enzyme that deacylates mischarged D-aminoacyl-tRNAs. Also deacylates mischarged glycyl-tRNA(Ala), protecting cells against glycine mischarging by AlaRS. Acts via tRNA-based rather than protein-based catalysis; rejects L-amino acids rather than detecting D-amino acids in the active site. By recycling D-aminoacyl-tRNA to D-amino acids and free tRNA molecules, this enzyme counteracts the toxicity associated with the formation of D-aminoacyl-tRNA entities in vivo and helps enforce protein L-homochirality. The polypeptide is D-aminoacyl-tRNA deacylase (Acaryochloris marina (strain MBIC 11017)).